A 323-amino-acid chain; its full sequence is NADH-ubiquinone oxidoreductase chain 1 (323 aa).

8 consecutive transmembrane segments (helical) span residues 4 to 24 (LFTV…VAFL), 73 to 93 (YLFF…WNLM), 106 to 126 (LLLV…SGWA), 150 to 170 (LALI…TYIM), 175 to 195 (FSWF…STLA), 226 to 246 (LFFI…VVIF), 256 to 276 (LFPL…FLFL), and 303 to 323 (IGAL…LPLF).

The protein belongs to the complex I subunit 1 family.

Its subcellular location is the mitochondrion inner membrane. It carries out the reaction a ubiquinone + NADH + 5 H(+)(in) = a ubiquinol + NAD(+) + 4 H(+)(out). Its function is as follows. Core subunit of the mitochondrial membrane respiratory chain NADH dehydrogenase (Complex I) that is believed to belong to the minimal assembly required for catalysis. Complex I functions in the transfer of electrons from NADH to the respiratory chain. The immediate electron acceptor for the enzyme is believed to be ubiquinone. In Paracentrotus lividus (Common sea urchin), this protein is NADH-ubiquinone oxidoreductase chain 1 (ND1).